The primary structure comprises 100 residues: Apolipoprotein C-II (100 aa).

The signal sequence occupies residues 1 to 22 (MGTRFLLALFLVLLVLGFEVQG). Residues 66–74 (TVDEKLRDM) are lipid binding. The segment at 78–100 (STAAVSTYAGIFTDQLLTLLKGD) is lipoprotein lipase cofactor.

It belongs to the apolipoprotein C2 family. Post-translationally, proapolipoprotein C-II is synthesized as a sialic acid containing glycoprotein which is subsequently desialylated prior to its proteolytic processing. Proapolipoprotein C-II, the major form found in plasma undergoes proteolytic cleavage of its N-terminal hexapeptide to generate apolipoprotein C-II, which occurs as the minor form in plasma.

Its subcellular location is the secreted. Its function is as follows. Component of chylomicrons, very low-density lipoproteins (VLDL), low-density lipoproteins (LDL), and high-density lipoproteins (HDL) in plasma. Plays an important role in lipoprotein metabolism as an activator of lipoprotein lipase. Both proapolipoprotein C-II and apolipoprotein C-II can activate lipoprotein lipase. In Otolemur garnettii (Small-eared galago), this protein is Apolipoprotein C-II (APOC2).